A 284-amino-acid chain; its full sequence is 4-diphosphocytidyl-2-C-methyl-D-erythritol kinase (284 aa).

Residue Lys-10 is part of the active site. Residue 95–105 participates in ATP binding; the sequence is PVAAGLGGGSS. Residue Asp-137 is part of the active site.

This sequence belongs to the GHMP kinase family. IspE subfamily.

The enzyme catalyses 4-CDP-2-C-methyl-D-erythritol + ATP = 4-CDP-2-C-methyl-D-erythritol 2-phosphate + ADP + H(+). Its pathway is isoprenoid biosynthesis; isopentenyl diphosphate biosynthesis via DXP pathway; isopentenyl diphosphate from 1-deoxy-D-xylulose 5-phosphate: step 3/6. Functionally, catalyzes the phosphorylation of the position 2 hydroxy group of 4-diphosphocytidyl-2C-methyl-D-erythritol. The chain is 4-diphosphocytidyl-2-C-methyl-D-erythritol kinase from Levilactobacillus brevis (strain ATCC 367 / BCRC 12310 / CIP 105137 / JCM 1170 / LMG 11437 / NCIMB 947 / NCTC 947) (Lactobacillus brevis).